Reading from the N-terminus, the 1440-residue chain is MGARASVLSGGKLDAWEKIRLRPGGKKKYRLKHLVWASRELERFALNPGLLETGEGCQQIMEQLQSTLKTGSEEIKSLYNTVATLYCVHQRIDVKDTKEALDKIEEIQNKSRQKTQQAAAAQQAAAATKNSSSVSQNYPIVQNAQGQMIHQAISPRTLNAWVKVIEEKAFSPEVIPMFSALSEGATPQDLNMMLNIVGGHQAAMQMLKDTINEEAADWDRVHPVHAGPIPPGQMREPRGSDIAGTTSTLQEQIGWMTSNPPIPVGDIYKRWIILGLNKIVRMYSPVSILDIRQGPKEPFRDYVDRFFKTLRAEQATQEVKNWMTETLLVQNANPDCKTILKALGPGATLEEMMTACQGVGGPSHKARVLAEAMSQATNSTAAIMMQRGNFKGQKRIKCFNCGKEGHLARNCRAPRKKGCWKCGKEGHQMKDCTERQANFLRENLAFPQGKAREFPSEQTRANSPTSRELRVWGGDKTLSETGAERQGIVSFSFPQITLWQRPVVTVRVGGQLKEALLDTGADDTVLEEINLPGKWKPKMIGGIGGFIKVRQYDQILIEICGKKAIGTILVGPTPVNIIGRNMLTQIGCTLNFPISPIETVPVKLKPGMDGPRVKQWPLTEEKIKALTEICKDMEKEGKILKIGPENPYNTPVFAIKKKDSTKWRKLVNFRELNKRTQDFWEVQLGIPHPAGLKKKKSVTVLDVGDAYFSVPLDEDFRKYTAFTIPSINNETPGIRYQYNVLPQGWKGSPAIFQSSMTKILEPFRTKNPEIVIYQYMDDLYVGSDLEIGQHRTKIEELREHLLKWGFTTPDKKHQKEPPFLWMGYELHPDKWTVQPIQLPDKESWTVNDIQKLVGKLNWASQIYPGIKVKQLCKLLRGAKALTDIVPLTAEAELELAENREILKEPVHGVYYDPSKDLIAEIQKQGQGQWTYQIYQEQYKNLKTGKYARIKSAHTNDVKQLTEAVQKIAQESIVIWGKTPKFRLPIQKETWEAWWTEYWQATWIPEWEFVNTPPLVKLWYQLETEPIVGAETFYVDGAANRETKKGKAGYVTDRGRQKVVSLTETTNQKTELQAIHLALQDSGSEVNIVTDSQYALGIIQAQPDKSESEIVNQIIEQLIQKDKVYLSWVPAHKGIGGNEQVDKLVSSGIRKVLFLDGIDKAQEEHEKYHSNWRAMASDFNLPPIVAKEIVASCDKCQLKGEAMHGQVDCSPGIWQLDCTHLEGKIIIVAVHVASGYIEAEVIPAETGQETAYFILKLAGRWPVKVVHTDNGSNFTSAAVKAACWWANIKQEFGIPYNPQSQGVVESMNKELKKIIGQVREQAEHLKTAVQMAVFIHNFKRKGGIGGYSAGERIIDMIATDIQTKELQKQITKIQNFRVYYRDNRDPIWKGPAKLLWKGEGAVVIQDNSDIKVVPRRKAKIIRDYGKQMAGDDCVAGGQDED.

The N-myristoyl glycine; by host moiety is linked to residue Gly-2. The segment at 7-31 is interaction with Gp41; sequence VLSGGKLDAWEKIRLRPGGKKKYRL. The interval 8 to 43 is interaction with host CALM1; sequence LSGGKLDAWEKIRLRPGGKKKYRLKHLVWASRELER. The interaction with host AP3D1 stretch occupies residues 12–19; the sequence is KLDAWEKI. The interaction with membrane phosphatidylinositol 4,5-bisphosphate and RNA stretch occupies residues 14–33; that stretch reads DAWEKIRLRPGGKKKYRLKH. The short motif at 16-22 is the Nuclear export signal element; it reads WEKIRLR. A Nuclear localization signal motif is present at residues 26–32; that stretch reads KKKYRLK. Residues 73 to 77 form an interaction with membrane phosphatidylinositol 4,5-bisphosphate region; that stretch reads EEIKS. Residue Tyr-138 is modified to Phosphotyrosine; by host. The segment at 195-233 is interaction with human PPIA/CYPA and NUP153; it reads NIVGGHQAAMQMLKDTINEEAADWDRVHPVHAGPIPPGQ. Residues 283–369 are dimerization/Multimerization of capsid protein p24; it reads YSPVSILDIR…GGPSHKARVL (87 aa). 2 CCHC-type zinc fingers span residues 396–413 and 417–434; these read IKCF…NCRA and KGCW…DCTE. The segment at 494 to 498 is dimerization of protease; it reads PQITL. In terms of domain architecture, Peptidase A2 spans 513–582; that stretch reads KEALLDTGAD…TPVNIIGRNM (70 aa). Asp-518 functions as the For protease activity; shared with dimeric partner in the catalytic mechanism. Dimerization of protease stretches follow at residues 542–548 and 581–593; these read GIGGFIK and NMLT…LNFP. Residues 636-826 form the Reverse transcriptase domain; sequence EGKILKIGPE…PPFLWMGYEL (191 aa). Mg(2+) contacts are provided by Asp-702, Asp-777, and Asp-778. The interval 819–827 is RT 'primer grip'; it reads FLWMGYELH. Residues 990 to 1006 carry the Tryptophan repeat motif motif; the sequence is WEAWWTEYWQATWIPEW. In terms of domain architecture, RNase H type-1 spans 1026–1149; sequence IVGAETFYVD…VDKLVSSGIR (124 aa). Residues Asp-1035, Glu-1070, Asp-1090, and Asp-1141 each contribute to the Mg(2+) site. The Integrase-type zinc finger occupies 1155 to 1196; that stretch reads DGIDKAQEEHEKYHSNWRAMASDFNLPPIVAKEIVASCDKCQ. Residues His-1164, His-1168, Cys-1192, and Cys-1195 each contribute to the Zn(2+) site. Residues 1206–1356 enclose the Integrase catalytic domain; it reads VDCSPGIWQL…SAGERIIDMI (151 aa). Residues Asp-1216, Asp-1268, and Glu-1304 each coordinate Mg(2+). The integrase-type DNA-binding region spans 1375 to 1422; that stretch reads FRVYYRDNRDPIWKGPAKLLWKGEGAVVIQDNSDIKVVPRRKAKIIRD.

As to quaternary structure, homotrimer; further assembles as hexamers of trimers. Interacts with gp41 (via C-terminus). Interacts with host CALM1; this interaction induces a conformational change in the Matrix protein, triggering exposure of the myristate group. Interacts with host AP3D1; this interaction allows the polyprotein trafficking to multivesicular bodies during virus assembly. Part of the pre-integration complex (PIC) which is composed of viral genome, matrix protein, Vpr and integrase. Homodimer; the homodimer further multimerizes as homohexamers or homopentamers. Interacts with human PPIA/CYPA; This interaction stabilizes the capsid. Interacts with human NUP153. Interacts with host PDZD8; this interaction stabilizes the capsid. Interacts with monkey TRIM5; this interaction destabilizes the capsid. In terms of assembly, homodimer, whose active site consists of two apposed aspartic acid residues. As to quaternary structure, heterodimer of p66 RT and p51 RT (RT p66/p51). Heterodimerization of RT is essential for DNA polymerase activity. The overall folding of the subdomains is similar in p66 RT and p51 RT but the spatial arrangements of the subdomains are dramatically different. Homotetramer; may further associate as a homohexadecamer. Part of the pre-integration complex (PIC) which is composed of viral genome, matrix protein, Vpr and integrase. Interacts with human SMARCB1/INI1 and human PSIP1/LEDGF isoform 1. Interacts with human KPNA3; this interaction might play a role in nuclear import of the pre-integration complex. Interacts with human NUP153; this interaction might play a role in nuclear import of the pre-integration complex. Mg(2+) serves as cofactor. Specific enzymatic cleavages by the viral protease yield mature proteins. The protease is released by autocatalytic cleavage. The polyprotein is cleaved during and after budding, this process is termed maturation. Proteolytic cleavage of p66 RT removes the RNase H domain to yield the p51 RT subunit. Nucleocapsid protein p7 might be further cleaved after virus entry. Post-translationally, tyrosine phosphorylated presumably in the virion by a host kinase. Phosphorylation is apparently not a major regulator of membrane association. In terms of processing, phosphorylated possibly by host MAPK1; this phosphorylation is necessary for Pin1-mediated virion uncoating. Methylated by host PRMT6, impairing its function by reducing RNA annealing and the initiation of reverse transcription.

The protein localises to the host cell membrane. Its subcellular location is the host endosome. It localises to the host multivesicular body. It is found in the virion membrane. The protein resides in the host nucleus. The protein localises to the host cytoplasm. Its subcellular location is the virion. The enzyme catalyses Specific for a P1 residue that is hydrophobic, and P1' variable, but often Pro.. The catalysed reaction is Endohydrolysis of RNA in RNA/DNA hybrids. Three different cleavage modes: 1. sequence-specific internal cleavage of RNA. Human immunodeficiency virus type 1 and Moloney murine leukemia virus enzymes prefer to cleave the RNA strand one nucleotide away from the RNA-DNA junction. 2. RNA 5'-end directed cleavage 13-19 nucleotides from the RNA end. 3. DNA 3'-end directed cleavage 15-20 nucleotides away from the primer terminus.. It catalyses the reaction 3'-end directed exonucleolytic cleavage of viral RNA-DNA hybrid.. It carries out the reaction DNA(n) + a 2'-deoxyribonucleoside 5'-triphosphate = DNA(n+1) + diphosphate. With respect to regulation, protease: The viral protease is inhibited by many synthetic protease inhibitors (PIs), such as amprenavir, atazanavir, indinavir, loprinavir, nelfinavir, ritonavir and saquinavir. Use of protease inhibitors in tritherapy regimens permit more ambitious therapeutic strategies. Reverse transcriptase/ribonuclease H: RT can be inhibited either by nucleoside RT inhibitors (NRTIs) or by non nucleoside RT inhibitors (NNRTIs). NRTIs act as chain terminators, whereas NNRTIs inhibit DNA polymerization by binding a small hydrophobic pocket near the RT active site and inducing an allosteric change in this region. Classical NRTIs are abacavir, adefovir (PMEA), didanosine (ddI), lamivudine (3TC), stavudine (d4T), tenofovir (PMPA), zalcitabine (ddC), and zidovudine (AZT). Classical NNRTIs are atevirdine (BHAP U-87201E), delavirdine, efavirenz (DMP-266), emivirine (I-EBU), and nevirapine (BI-RG-587). The tritherapies used as a basic effective treatment of AIDS associate two NRTIs and one NNRTI. In terms of biological role, mediates, with Gag polyprotein, the essential events in virion assembly, including binding the plasma membrane, making the protein-protein interactions necessary to create spherical particles, recruiting the viral Env proteins, and packaging the genomic RNA via direct interactions with the RNA packaging sequence (Psi). Gag-Pol polyprotein may regulate its own translation, by the binding genomic RNA in the 5'-UTR. At low concentration, the polyprotein would promote translation, whereas at high concentration, the polyprotein would encapsidate genomic RNA and then shut off translation. Targets the polyprotein to the plasma membrane via a multipartite membrane-binding signal, that includes its myristoylated N-terminus. Matrix protein is part of the pre-integration complex. Implicated in the release from host cell mediated by Vpu. Binds to RNA. Functionally, forms the conical core that encapsulates the genomic RNA-nucleocapsid complex in the virion. Most core are conical, with only 7% tubular. The core is constituted by capsid protein hexamer subunits. The core is disassembled soon after virion entry. Host restriction factors such as TRIM5-alpha or TRIMCyp bind retroviral capsids and cause premature capsid disassembly, leading to blocks in reverse transcription. Capsid restriction by TRIM5 is one of the factors which restricts HIV-1 to the human species. Host PIN1 apparently facilitates the virion uncoating. On the other hand, interactions with PDZD8 or CYPA stabilize the capsid. Its function is as follows. Encapsulates and protects viral dimeric unspliced genomic RNA (gRNA). Binds these RNAs through its zinc fingers. Acts as a nucleic acid chaperone which is involved in rearangement of nucleic acid secondary structure during gRNA retrotranscription. Also facilitates template switch leading to recombination. As part of the polyprotein, participates in gRNA dimerization, packaging, tRNA incorporation and virion assembly. In terms of biological role, aspartyl protease that mediates proteolytic cleavages of Gag and Gag-Pol polyproteins during or shortly after the release of the virion from the plasma membrane. Cleavages take place as an ordered, step-wise cascade to yield mature proteins. This process is called maturation. Displays maximal activity during the budding process just prior to particle release from the cell. Also cleaves Nef and Vif, probably concomitantly with viral structural proteins on maturation of virus particles. Hydrolyzes host EIF4GI and PABP1 in order to shut off the capped cellular mRNA translation. The resulting inhibition of cellular protein synthesis serves to ensure maximal viral gene expression and to evade host immune response. Also mediates cleavage of host YTHDF3. Mediates cleavage of host CARD8, thereby activating the CARD8 inflammasome, leading to the clearance of latent HIV-1 in patient CD4(+) T-cells after viral reactivation; in contrast, HIV-1 can evade CARD8-sensing when its protease remains inactive in infected cells prior to viral budding. Multifunctional enzyme that converts the viral RNA genome into dsDNA in the cytoplasm, shortly after virus entry into the cell. This enzyme displays a DNA polymerase activity that can copy either DNA or RNA templates, and a ribonuclease H (RNase H) activity that cleaves the RNA strand of RNA-DNA heteroduplexes in a partially processive 3' to 5' endonucleasic mode. Conversion of viral genomic RNA into dsDNA requires many steps. A tRNA(3)-Lys binds to the primer-binding site (PBS) situated at the 5'-end of the viral RNA. RT uses the 3' end of the tRNA primer to perform a short round of RNA-dependent minus-strand DNA synthesis. The reading proceeds through the U5 region and ends after the repeated (R) region which is present at both ends of viral RNA. The portion of the RNA-DNA heteroduplex is digested by the RNase H, resulting in a ssDNA product attached to the tRNA primer. This ssDNA/tRNA hybridizes with the identical R region situated at the 3' end of viral RNA. This template exchange, known as minus-strand DNA strong stop transfer, can be either intra- or intermolecular. RT uses the 3' end of this newly synthesized short ssDNA to perform the RNA-dependent minus-strand DNA synthesis of the whole template. RNase H digests the RNA template except for two polypurine tracts (PPTs) situated at the 5'-end and near the center of the genome. It is not clear if both polymerase and RNase H activities are simultaneous. RNase H probably can proceed both in a polymerase-dependent (RNA cut into small fragments by the same RT performing DNA synthesis) and a polymerase-independent mode (cleavage of remaining RNA fragments by free RTs). Secondly, RT performs DNA-directed plus-strand DNA synthesis using the PPTs that have not been removed by RNase H as primers. PPTs and tRNA primers are then removed by RNase H. The 3' and 5' ssDNA PBS regions hybridize to form a circular dsDNA intermediate. Strand displacement synthesis by RT to the PBS and PPT ends produces a blunt ended, linear dsDNA copy of the viral genome that includes long terminal repeats (LTRs) at both ends. Functionally, catalyzes viral DNA integration into the host chromosome, by performing a series of DNA cutting and joining reactions. This enzyme activity takes place after virion entry into a cell and reverse transcription of the RNA genome in dsDNA. The first step in the integration process is 3' processing. This step requires a complex comprising the viral genome, matrix protein, Vpr and integrase. This complex is called the pre-integration complex (PIC). The integrase protein removes 2 nucleotides from each 3' end of the viral DNA, leaving recessed CA OH's at the 3' ends. In the second step, the PIC enters cell nucleus. This process is mediated through integrase and Vpr proteins, and allows the virus to infect a non dividing cell. This ability to enter the nucleus is specific of lentiviruses, other retroviruses cannot and rely on cell division to access cell chromosomes. In the third step, termed strand transfer, the integrase protein joins the previously processed 3' ends to the 5' ends of strands of target cellular DNA at the site of integration. The 5'-ends are produced by integrase-catalyzed staggered cuts, 5 bp apart. A Y-shaped, gapped, recombination intermediate results, with the 5'-ends of the viral DNA strands and the 3' ends of target DNA strands remaining unjoined, flanking a gap of 5 bp. The last step is viral DNA integration into host chromosome. This involves host DNA repair synthesis in which the 5 bp gaps between the unjoined strands are filled in and then ligated. Since this process occurs at both cuts flanking the HIV genome, a 5 bp duplication of host DNA is produced at the ends of HIV-1 integration. Alternatively, Integrase may catalyze the excision of viral DNA just after strand transfer, this is termed disintegration. The chain is Gag-Pol polyprotein (gag-pol) from Human immunodeficiency virus type 1 group M subtype A (isolate MAL) (HIV-1).